The following is a 318-amino-acid chain: Peptidyl-prolyl cis-trans isomerase CPR4 (318 aa).

An N-terminal signal peptide occupies residues 1-20 (MWLKSLLLCLYSLVLCQVHA). Residues 55–225 (YFDPVSKSMK…HELRFLYFVL (171 aa)) form the PPIase cyclophilin-type domain. A glycan (N-linked (GlcNAc...) asparagine) is linked at Asn-166. A helical transmembrane segment spans residues 286–303 (ISRALMCLTVLGLCFIAY).

It localises to the membrane. It catalyses the reaction [protein]-peptidylproline (omega=180) = [protein]-peptidylproline (omega=0). Functionally, PPIases accelerate the folding of proteins. It catalyzes the cis-trans isomerization of proline imidic peptide bonds in oligopeptides. The chain is Peptidyl-prolyl cis-trans isomerase CPR4 (CPR4) from Saccharomyces cerevisiae (strain ATCC 204508 / S288c) (Baker's yeast).